We begin with the raw amino-acid sequence, 154 residues long: Large ribosomal subunit protein uL22 (154 aa).

Belongs to the universal ribosomal protein uL22 family. Part of the 50S ribosomal subunit.

Its function is as follows. This protein binds specifically to 23S rRNA. It makes multiple contacts with different domains of the 23S rRNA in the assembled 50S subunit and ribosome. In terms of biological role, the globular domain of the protein is located near the polypeptide exit tunnel on the outside of the subunit, while an extended beta-hairpin is found that lines the wall of the exit tunnel in the center of the 70S ribosome. The protein is Large ribosomal subunit protein uL22 of Natronomonas pharaonis (strain ATCC 35678 / DSM 2160 / CIP 103997 / JCM 8858 / NBRC 14720 / NCIMB 2260 / Gabara) (Halobacterium pharaonis).